The primary structure comprises 574 residues: Iron hydrogenase 1 (574 aa).

Residues 1 to 78 (MKTIIINGVQ…GMIINTNSDA (78 aa)) enclose the 2Fe-2S ferredoxin-type domain. The [2Fe-2S] cluster site is built by C34, C46, C49, and C62. One can recognise a 4Fe-4S His(Cys)3-ligated-type domain in the interval 78–117 (AVNEKIKSRISQLLDIHEFKCGPCNRRENCEFLKLVIKYK). [4Fe-4S] cluster-binding residues include H94, C98, C101, C107, C147, C150, C153, C157, C190, C193, C196, C200, C300, C355, C499, and C503. 2 4Fe-4S ferredoxin-type domains span residues 138–167 (KSLT…YAMK) and 181–210 (DEKC…EKSH). Residue C503 participates in Fe(2+) binding.

In terms of assembly, monomer. It depends on [2Fe-2S] cluster as a cofactor. The cofactor is [4Fe-4S] cluster. Fe(2+) serves as cofactor.

The catalysed reaction is H2 + 2 oxidized [2Fe-2S]-[ferredoxin] = 2 reduced [2Fe-2S]-[ferredoxin] + 2 H(+). This Clostridium pasteurianum protein is Iron hydrogenase 1.